The following is a 261-amino-acid chain: uncharacterized protein (261 aa).

This sequence belongs to the BtpA family.

This is an uncharacterized protein from Thermococcus kodakarensis (strain ATCC BAA-918 / JCM 12380 / KOD1) (Pyrococcus kodakaraensis (strain KOD1)).